We begin with the raw amino-acid sequence, 745 residues long: Serine/threonine-protein kinase GG21441 (745 aa).

Positions 49–73 are disordered; it reads RNQQQNVQKDFDSHNRDCDSPVSST. Residues 57–67 are compositionally biased toward basic and acidic residues; the sequence is KDFDSHNRDCD. 2 Doublecortin domains span residues 159-245 and 315-398; these read LRIK…VEYN and RIVT…AEDF. The 259-residue stretch at 479–737 folds into the Protein kinase domain; it reads YTLGRIIGDG…SEDILDHYWT (259 aa). Residues 485–493 and lysine 508 each bind ATP; that span reads IGDGNFAIV. The active-site Proton acceptor is the aspartate 600.

It belongs to the protein kinase superfamily. CAMK Ser/Thr protein kinase family. CaMK subfamily.

The enzyme catalyses L-seryl-[protein] + ATP = O-phospho-L-seryl-[protein] + ADP + H(+). It catalyses the reaction L-threonyl-[protein] + ATP = O-phospho-L-threonyl-[protein] + ADP + H(+). The chain is Serine/threonine-protein kinase GG21441 from Drosophila erecta (Fruit fly).